A 236-amino-acid polypeptide reads, in one-letter code: 2-C-methyl-D-erythritol 4-phosphate cytidylyltransferase (236 aa).

The protein belongs to the IspD/TarI cytidylyltransferase family. IspD subfamily.

The catalysed reaction is 2-C-methyl-D-erythritol 4-phosphate + CTP + H(+) = 4-CDP-2-C-methyl-D-erythritol + diphosphate. The protein operates within isoprenoid biosynthesis; isopentenyl diphosphate biosynthesis via DXP pathway; isopentenyl diphosphate from 1-deoxy-D-xylulose 5-phosphate: step 2/6. Its function is as follows. Catalyzes the formation of 4-diphosphocytidyl-2-C-methyl-D-erythritol from CTP and 2-C-methyl-D-erythritol 4-phosphate (MEP). This chain is 2-C-methyl-D-erythritol 4-phosphate cytidylyltransferase, found in Pseudomonas syringae pv. syringae (strain B728a).